Consider the following 395-residue polypeptide: Chaperone protein DnaJ 1 (395 aa).

The J domain occupies 10-75 (DFYQELGVSS…AKRKEYDETR (66 aa)). The segment at 164–242 (GVAMPLRLTS…CKGTGVTTRT (79 aa)) adopts a CR-type zinc-finger fold. Residues Cys177, Cys180, Cys194, Cys197, Cys216, Cys219, Cys230, and Cys233 each contribute to the Zn(2+) site. CXXCXGXG motif repeat units follow at residues 177–184 (CTNCHGSG), 194–201 (CPTCNGSG), 216–223 (CTDCRGSG), and 230–237 (CEECKGTG).

It belongs to the DnaJ family. Homodimer. The cofactor is Zn(2+).

The protein localises to the cytoplasm. In terms of biological role, participates actively in the response to hyperosmotic and heat shock by preventing the aggregation of stress-denatured proteins and by disaggregating proteins, also in an autonomous, DnaK-independent fashion. Unfolded proteins bind initially to DnaJ; upon interaction with the DnaJ-bound protein, DnaK hydrolyzes its bound ATP, resulting in the formation of a stable complex. GrpE releases ADP from DnaK; ATP binding to DnaK triggers the release of the substrate protein, thus completing the reaction cycle. Several rounds of ATP-dependent interactions between DnaJ, DnaK and GrpE are required for fully efficient folding. Also involved, together with DnaK and GrpE, in the DNA replication of plasmids through activation of initiation proteins. The sequence is that of Chaperone protein DnaJ 1 from Mycobacterium bovis (strain ATCC BAA-935 / AF2122/97).